Here is a 1191-residue protein sequence, read N- to C-terminus: Pyruvate-flavodoxin oxidoreductase (1191 aa).

4Fe-4S ferredoxin-type domains lie at 687–716 (QVCS…VKAV) and 744–773 (YVLA…TGAR). The [4Fe-4S] cluster site is built by Cys696, Cys699, Cys702, Cys706, Cys753, Cys756, Cys759, Cys763, Cys825, Cys828, Cys853, and Cys1085.

It belongs to the pyruvate:ferredoxin/flavodoxin oxidoreductase family. It depends on [4Fe-4S] cluster as a cofactor.

It catalyses the reaction oxidized [flavodoxin] + pyruvate + CoA + 2 H(+) = reduced [flavodoxin] + acetyl-CoA + CO2. In terms of biological role, oxidoreductase required for the transfer of electrons from pyruvate to flavodoxin, which reduces nitrogenase. This Rhodospirillum rubrum (strain ATCC 11170 / ATH 1.1.1 / DSM 467 / LMG 4362 / NCIMB 8255 / S1) protein is Pyruvate-flavodoxin oxidoreductase (nifJ).